The sequence spans 381 residues: 8-amino-7-oxononanoate synthase (381 aa).

Substrate is bound at residue Arg27. Residue 105–106 coordinates pyridoxal 5'-phosphate; the sequence is GY. His130 is a binding site for substrate. Pyridoxal 5'-phosphate is bound by residues Ser176, 201–204, and 232–235; these read DEAH and TLSK. At Lys235 the chain carries N6-(pyridoxal phosphate)lysine. A substrate-binding site is contributed by Thr345.

Belongs to the class-II pyridoxal-phosphate-dependent aminotransferase family. BioF subfamily. In terms of assembly, homodimer. Requires pyridoxal 5'-phosphate as cofactor.

The catalysed reaction is 6-carboxyhexanoyl-[ACP] + L-alanine + H(+) = (8S)-8-amino-7-oxononanoate + holo-[ACP] + CO2. It functions in the pathway cofactor biosynthesis; biotin biosynthesis. In terms of biological role, catalyzes the decarboxylative condensation of pimeloyl-[acyl-carrier protein] and L-alanine to produce 8-amino-7-oxononanoate (AON), [acyl-carrier protein], and carbon dioxide. The chain is 8-amino-7-oxononanoate synthase from Mycobacterium avium (strain 104).